The sequence spans 341 residues: Glyceraldehyde-3-phosphate dehydrogenase 2 (341 aa).

Residues 13-14 (RI), Asp35, and Lys85 each bind NAD(+). D-glyceraldehyde 3-phosphate-binding positions include 157-159 (SCT), Thr188, 217-218 (TG), and Arg240. The Nucleophile role is filled by Cys158. Asn322 is a binding site for NAD(+).

The protein belongs to the glyceraldehyde-3-phosphate dehydrogenase family. In terms of assembly, homotetramer.

It is found in the cytoplasm. The catalysed reaction is D-glyceraldehyde 3-phosphate + phosphate + NAD(+) = (2R)-3-phospho-glyceroyl phosphate + NADH + H(+). The protein operates within carbohydrate degradation; glycolysis; pyruvate from D-glyceraldehyde 3-phosphate: step 1/5. The polypeptide is Glyceraldehyde-3-phosphate dehydrogenase 2 (Caenorhabditis briggsae).